Reading from the N-terminus, the 295-residue chain is Adrenocorticotropic hormone receptor (295 aa).

Over 1–23 (MRHILNLYENINSTARNNSDCPA) the chain is Extracellular. N-linked (GlcNAc...) asparagine glycosylation is found at asparagine 12 and asparagine 17. Intrachain disulfides connect cysteine 21/cysteine 253 and cysteine 245/cysteine 251. The helical transmembrane segment at 24–49 (VILPEEIFFTVSIVGVLENLMVLLAV) threads the bilayer. The Cytoplasmic segment spans residues 50 to 58 (AKNKSLQSP). The chain crosses the membrane as a helical span at residues 59 to 79 (MYFFICSLAISDMLGSLYKIL). Residues 80-104 (ENVLIMFRNMGYLEPRGSFESTADD) are Extracellular-facing. Residues 105–126 (VVDSLFILSLLGSICSLSVIAA) form a helical membrane-spanning segment. At 127–147 (DRYITIFHALQYHSIVTMHRA) the chain is on the cytoplasmic side. A helical transmembrane segment spans residues 148-168 (LVVLTVLWAGCTGSGITIVTF). The Extracellular segment spans residues 169 to 180 (SHHVPTVIAFTA). Residues 181 to 199 (LFPLMLAFILCLYVHMFLL) traverse the membrane as a helical segment. Residues 200-217 (ARSHARRTSSLPKANMRG) are Cytoplasmic-facing. A helical membrane pass occupies residues 218–244 (AITLTVLLGVFIFCWAPFVLHVLLMTF). Topologically, residues 245–256 (CPADPYCACYMS) are extracellular. Residues 257-278 (LFQVNGVLIMCNAVIDPFIYAF) form a helical membrane-spanning segment. Residues 279–295 (RSPELRVAFKKMVICNW) are Cytoplasmic-facing. Residue cysteine 293 is the site of S-palmitoyl cysteine attachment.

This sequence belongs to the G-protein coupled receptor 1 family. As to quaternary structure, homodimer. Interacts with corticotropin (ACTH). Interacts with MRAP; this interaction targets MC2R to the plasma membrane. Interacts with MRAP2; competing with MRAP for binding to MC2R and impairing the binding of corticotropin (ACTH). Ubiquitinated by MGRN1 that may be involved in post-endocytic trafficking and/or degradation of internalized receptor.

It localises to the cell membrane. Its function is as follows. Hormone receptor primarily expressed in adrenal cortex that plays a key role in regulating adrenocortical function. Upon corticotropin (ACTH) binding, facilitates the release of adrenal glucocorticoids, including cortisol and corticosterone. In addition, MC2R is required for fetal and neonatal adrenal gland development. Mechanistically, activates adenylate cyclase (cAMP), the MAPK cascade as well as the cAMP-dependent protein kinase A pathway leading to steroidogenic factor 1/NR5A1-mediated transcriptional activation. The protein is Adrenocorticotropic hormone receptor (MC2R) of Ovis aries (Sheep).